Consider the following 431-residue polypeptide: 3-deoxy-D-manno-octulosonic acid transferase (431 aa).

A helical; Signal-anchor membrane pass occupies residues 5-27 (WLTSRLYDAFLVCAFFVSAPRIF). The active-site Proton acceptor is the E67. CMP is bound by residues 275 to 276 (PR), 315 to 317 (MGV), and 342 to 345 (NLLE).

The protein belongs to the glycosyltransferase group 1 family. Glycosyltransferase 30 subfamily.

Its subcellular location is the cell inner membrane. The enzyme catalyses lipid IVA (E. coli) + CMP-3-deoxy-beta-D-manno-octulosonate = alpha-Kdo-(2-&gt;6)-lipid IVA (E. coli) + CMP + H(+). It carries out the reaction alpha-Kdo-(2-&gt;6)-lipid IVA (E. coli) + CMP-3-deoxy-beta-D-manno-octulosonate = alpha-Kdo-(2-&gt;4)-alpha-Kdo-(2-&gt;6)-lipid IVA (E. coli) + CMP + H(+). It catalyses the reaction alpha-Kdo-(2-&gt;4)-alpha-Kdo-(2-&gt;6)-lipid IVA (E. coli) + CMP-3-deoxy-beta-D-manno-octulosonate = alpha-Kdo-(2-&gt;8)-alpha-Kdo-(2-&gt;4)-alpha-Kdo-(2-&gt;6)-lipid IVA (E. coli) + CMP + H(+). It participates in bacterial outer membrane biogenesis; LPS core biosynthesis. Functionally, involved in lipopolysaccharide (LPS) biosynthesis. Catalyzes the transfer of three 3-deoxy-D-manno-octulosonate (Kdo) residues from CMP-Kdo to lipid IV(A), the tetraacyldisaccharide-1,4'-bisphosphate precursor of lipid A. Thus generates the genus-specific LPS epitope of Chlamydia, composed of the trisaccharide alpha-Kdo-(2-&gt;8)-alpha-Kdo-(2-&gt;4)-alpha-Kdo. This chain is 3-deoxy-D-manno-octulosonic acid transferase (waaA), found in Chlamydia trachomatis serovar D (strain ATCC VR-885 / DSM 19411 / UW-3/Cx).